Consider the following 56-residue polypeptide: Large ribosomal subunit protein bL32 (56 aa).

The segment covering 1–16 (MAVQKSKKSRSMRGMR) has biased composition (basic residues). Positions 1–21 (MAVQKSKKSRSMRGMRRSHDA) are disordered.

Belongs to the bacterial ribosomal protein bL32 family.

In Vibrio atlanticus (strain LGP32) (Vibrio splendidus (strain Mel32)), this protein is Large ribosomal subunit protein bL32.